An 880-amino-acid polypeptide reads, in one-letter code: Pyruvate, phosphate dikinase (880 aa).

The interval 1-348 is N-terminal; the sequence is MNKLIYYFGN…LYILQTRTAK (348 aa). R97 provides a ligand contact to ATP. Positions 349 to 405 are linker 1; sequence RTAIAAINIAVQMVEEKLISKEQALMRIDPESLNQLLHTRIDYSKKLTAIAEGLPAS. Residues 406–503 are central; that stretch reads PGAATGIVVF…VIKQGDIITI (98 aa). A Phosphothreonine; by PDRP1 modification is found at T458. Catalysis depends on H460, which acts as the Tele-phosphohistidine intermediate. Positions 504–538 are linker 2; it reads DGGSGKIFLGEMPLIQPTFSEESTLILDWADEISS. The tract at residues 539-879 is C-terminal; that stretch reads LKVRANAETV…AAAQAKIKQG (341 aa). Residues R566, R622, E750, G771, T772, N773, and D774 each contribute to the substrate site. E750 contacts Mg(2+). Residue D774 coordinates Mg(2+). The Proton donor role is filled by C836.

It belongs to the PEP-utilizing enzyme family. Homodimer. Mg(2+) is required as a cofactor. Post-translationally, phosphorylation of Thr-458 in the dark inactivates the enzyme. Dephosphorylation upon light stimulation reactivates the enzyme.

It catalyses the reaction pyruvate + phosphate + ATP = phosphoenolpyruvate + AMP + diphosphate + H(+). Activated by light-induced dephosphorylation. Inhibited by dark-induced phosphorylation. Both reactions are catalyzed by PDRP1. Catalyzes the reversible phosphorylation of pyruvate and phosphate. This chain is Pyruvate, phosphate dikinase (ppdK), found in Rickettsia typhi (strain ATCC VR-144 / Wilmington).